We begin with the raw amino-acid sequence, 251 residues long: CDP-diacylglycerol pyrophosphatase (251 aa).

A helical membrane pass occupies residues 4–24 (AGLLFLVMIVIAVVAAGIGYW).

Belongs to the Cdh family.

The protein resides in the cell inner membrane. It catalyses the reaction a CDP-1,2-diacyl-sn-glycerol + H2O = a 1,2-diacyl-sn-glycero-3-phosphate + CMP + 2 H(+). Its pathway is phospholipid metabolism; CDP-diacylglycerol degradation; phosphatidate from CDP-diacylglycerol: step 1/1. The chain is CDP-diacylglycerol pyrophosphatase from Escherichia coli O81 (strain ED1a).